The chain runs to 252 residues: Imidazole glycerol phosphate synthase subunit HisF (252 aa).

Active-site residues include aspartate 11 and aspartate 130.

It belongs to the HisA/HisF family. Heterodimer of HisH and HisF.

The protein resides in the cytoplasm. The enzyme catalyses 5-[(5-phospho-1-deoxy-D-ribulos-1-ylimino)methylamino]-1-(5-phospho-beta-D-ribosyl)imidazole-4-carboxamide + L-glutamine = D-erythro-1-(imidazol-4-yl)glycerol 3-phosphate + 5-amino-1-(5-phospho-beta-D-ribosyl)imidazole-4-carboxamide + L-glutamate + H(+). The protein operates within amino-acid biosynthesis; L-histidine biosynthesis; L-histidine from 5-phospho-alpha-D-ribose 1-diphosphate: step 5/9. In terms of biological role, IGPS catalyzes the conversion of PRFAR and glutamine to IGP, AICAR and glutamate. The HisF subunit catalyzes the cyclization activity that produces IGP and AICAR from PRFAR using the ammonia provided by the HisH subunit. In Halothermothrix orenii (strain H 168 / OCM 544 / DSM 9562), this protein is Imidazole glycerol phosphate synthase subunit HisF.